The chain runs to 108 residues: Insulin-like peptide 17 (108 aa).

Positions 1–19 (MFSTRGVLLLLSLMAAVAA) are cleaved as a signal peptide.

This sequence belongs to the insulin family. As to expression, expressed in head neurons and the uterus.

It is found in the secreted. Involved in the regulation of the larval diapause. This is Insulin-like peptide 17 from Caenorhabditis elegans.